A 311-amino-acid polypeptide reads, in one-letter code: Serpentine receptor class gamma-6 (311 aa).

7 helical membrane passes run 24-44 (MGQLVYLIPSFILISKMIYVI), 58-78 (FWLLYTMDLALSLLNLFFDIF), 101-121 (PLLIDITYPLWFYFHVGKMVA), 148-168 (LTACVIMIIFVPFSIIWNILI), 200-220 (YMQISMAVTLLSNIVTGAILW), 235-255 (IWFAISTEYLLSACAFCYLHM), and 266-286 (IFMLVIFVWDGFNILSPVIMI).

Belongs to the nematode receptor-like protein srg family.

The protein localises to the membrane. In Caenorhabditis elegans, this protein is Serpentine receptor class gamma-6 (srg-6).